The primary structure comprises 341 residues: Protein DOWNY MILDEW RESISTANCE 6 (341 aa).

The 101-residue stretch at 188–288 folds into the Fe2OG dioxygenase domain; sequence QGQHMAVNYY…RLSVASFLCP (101 aa). The Fe cation site is built by His-212, Asp-214, and His-269. 2-oxoglutarate is bound at residue Arg-279.

Belongs to the iron/ascorbate-dependent oxidoreductase family. Fe(2+) serves as cofactor.

The catalysed reaction is salicylate + NADH + O2 + H(+) = 2,3-dihydroxybenzoate + NAD(+) + H2O. In terms of biological role, converts salicylic acid (SA) to 2,3-dihydroxybenzoic acid (2,3-DHBA). Suppressor of immunity. Regulates negatively defense associated genes expression (e.g. PR-1, PR-2, and PR-5). Negative regulator of defense against Hyaloperonospora arabidopsidis. Its function is as follows. (Microbial infection) Required for susceptibility to the downy mildew pathogen Hyaloperonospora arabidopsidis. Functionally, (Microbial infection) Required for susceptibility to Pseudomonas syringae pv. tomato DC3000. (Microbial infection) Required for susceptibility to the oomycete Phytophthora capsici. In Arabidopsis thaliana (Mouse-ear cress), this protein is Protein DOWNY MILDEW RESISTANCE 6.